Here is a 466-residue protein sequence, read N- to C-terminus: MATVDTILQGKYPAKAHARRVAEYLQAQCPGNPGVIYLESQKTRMIEDNDETMPFRQRRPFFYLSGCLLPEASLVYDVSADKLTLFIPAIDPEDVIWSGLPLSPSEAMELYDVDNVLTTPEVNATLASIASAHNGKAVAYAIQGRTSPETKFEGFQDANFTLLNGWIEQARVVKDAYEIALLRKANDISTKAHIAAIKAAKTATNEREIEGAFIATCIANGAREQSYHPIVACGENGATLHYPKNDAELTDPVTKQRKKNVLIDAGGEYRTYCADITRVIPLGGRFAQETRQIYQIVLQMQLECIAMLKDGVLWDDVHAHAHRVAIKGLLQLGILRGSEDELFEKRVSVAFFPHGLGHYLGMDTHDTGGNPNYGDKDKMFRYLRVRGHLPAGSVITVEPGIYFCRFIIEPYIKSPETSKYIDTDVLERYWSVGGVRIEDNVHVTKDGYENLTTAPKIMEEVESLAL.

Mn(2+) contacts are provided by Asp264, Asp275, Glu398, and Glu438.

It belongs to the peptidase M24B family. It depends on Mn(2+) as a cofactor.

The enzyme catalyses Release of any N-terminal amino acid, including proline, that is linked to proline, even from a dipeptide or tripeptide.. In terms of biological role, catalyzes the removal of a penultimate prolyl residue from the N-termini of peptides. This chain is Probable Xaa-Pro aminopeptidase pepP (pepP), found in Aspergillus terreus (strain NIH 2624 / FGSC A1156).